The primary structure comprises 101 residues: Small ribosomal subunit protein uS14 (101 aa).

Belongs to the universal ribosomal protein uS14 family. As to quaternary structure, part of the 30S ribosomal subunit. Contacts proteins S3 and S10.

Binds 16S rRNA, required for the assembly of 30S particles and may also be responsible for determining the conformation of the 16S rRNA at the A site. In Tropheryma whipplei (strain TW08/27) (Whipple's bacillus), this protein is Small ribosomal subunit protein uS14.